Consider the following 201-residue polypeptide: Protease (201 aa).

Residues H55, D72, and C122 contribute to the active site.

The protein belongs to the peptidase C5 family. Interacts with protease cofactor pVI-C; this interaction is necessary for protease activation.

Its subcellular location is the virion. The protein resides in the host nucleus. It catalyses the reaction Cleaves proteins of the adenovirus and its host cell at two consensus sites: -Yaa-Xaa-Gly-Gly-|-Xaa- and -Yaa-Xaa-Gly-Xaa-|-Gly- (in which Yaa is Met, Ile or Leu, and Xaa is any amino acid).. Requires DNA and protease cofactor for maximal activation. Inside nascent virions, becomes partially activated by binding to the viral DNA, allowing it to cleave the cofactor that binds to the protease and fully activates it. Actin, like the viral protease cofactor, seems to act as a cofactor in the cleavage of cytokeratin 18 and of actin itself. Functionally, cleaves viral precursor proteins (pTP, pIIIa, pVI, pVII, pVIII, and pX) inside newly assembled particles giving rise to mature virions. Protease complexed to its cofactor slides along the viral DNA to specifically locate and cleave the viral precursors. Mature virions have a weakened organization compared to the unmature virions, thereby facilitating subsequent uncoating. Without maturation, the particle lacks infectivity and is unable to uncoat. Late in adenovirus infection, in the cytoplasm, may participate in the cytoskeleton destruction. Cleaves host cell cytoskeletal keratins K7 and K18. The sequence is that of Protease from Pantherophis guttatus (Corn snake).